Here is a 277-residue protein sequence, read N- to C-terminus: Release factor glutamine methyltransferase (277 aa).

S-adenosyl-L-methionine contacts are provided by residues 119–123 (GTGCG), aspartate 142, tryptophan 170, and asparagine 184. 184 to 187 (NPPY) serves as a coordination point for substrate.

Belongs to the protein N5-glutamine methyltransferase family. PrmC subfamily.

The catalysed reaction is L-glutaminyl-[peptide chain release factor] + S-adenosyl-L-methionine = N(5)-methyl-L-glutaminyl-[peptide chain release factor] + S-adenosyl-L-homocysteine + H(+). Functionally, methylates the class 1 translation termination release factors RF1/PrfA and RF2/PrfB on the glutamine residue of the universally conserved GGQ motif. This Buchnera aphidicola subsp. Baizongia pistaciae (strain Bp) protein is Release factor glutamine methyltransferase.